The primary structure comprises 538 residues: Probable inorganic phosphate transporter 1-4 (538 aa).

Residues 1 to 23 (MAGELKVLNALDSAKTQWYHFTA) lie on the Cytoplasmic side of the membrane. The helical transmembrane segment at 24-44 (IVIAGMGFFTDAYDLFSISLV) threads the bilayer. Topologically, residues 45–69 (TKLLGRIYYFNPASKSPGSLPPNVS) are extracellular. The helical transmembrane segment at 70 to 90 (AAVNGVAFCGTLAGQLFFGWL) threads the bilayer. At 91 to 98 (GDKMGRKK) the chain is on the cytoplasmic side. Residues 99–119 (VYGMTLMLMVICCLASGLSFG) traverse the membrane as a helical segment. Over 120–123 (SSAK) the chain is Extracellular. The chain crosses the membrane as a helical span at residues 124 to 144 (GVMATLCFFRFWLGFGIGGDY). The Cytoplasmic portion of the chain corresponds to 145 to 163 (PLSATIMSEYANKRTRGAF). A helical membrane pass occupies residues 164 to 184 (IAAVFAMQGFGNLTGGIVAII). Over 185 to 210 (VSAAFKSRFDAPAYRDDRTGSTVPQA) the chain is Extracellular. Residues 211–231 (DYAWRIVLMFGAIPALLTYYW) traverse the membrane as a helical segment. The Cytoplasmic segment spans residues 232–294 (RMKMPETARY…RQFLRRHGRH (63 aa)). Residues 295-315 (LLGTTVCWFVLDIAFYSSNLF) traverse the membrane as a helical segment. The Extracellular segment spans residues 316–346 (QKDIYTAVQWLPKADTMSALEEMFKISRAQT). Residues 347-367 (LVALCGTIPGYWFTVFFIDII) form a helical membrane-spanning segment. Topologically, residues 368–369 (GR) are cytoplasmic. The chain crosses the membrane as a helical span at residues 370 to 390 (FVIQLGGFFFMTAFMLGLAVP). At 391–396 (YHHWTT) the chain is on the extracellular side. The helical transmembrane segment at 397-417 (PGNHIGFVVMYAFTFFFANFG) threads the bilayer. Residues 418 to 440 (PNSTTFIVPAEIFPARLRSTCHG) lie on the Cytoplasmic side of the membrane. The chain crosses the membrane as a helical span at residues 441-461 (ISAAAGKAGAIVGSFGFLYAA). The Extracellular portion of the chain corresponds to 462 to 481 (QSTDASKTDAGYPPGIGVRN). Residues 482-502 (SLFFLAGCNVIGFFFTFLVPE) form a helical membrane-spanning segment. At 503–538 (SKGKSLEELSGENEDDDDVPEAPATADHRTAPAPPA) the chain is on the cytoplasmic side. The tract at residues 507–538 (SLEELSGENEDDDDVPEAPATADHRTAPAPPA) is disordered. Acidic residues predominate over residues 511-522 (LSGENEDDDDVP).

This sequence belongs to the major facilitator superfamily. Phosphate:H(+) symporter (TC 2.A.1.9) family. Expressed at low levels in roots.

It is found in the membrane. Its function is as follows. High-affinity transporter for external inorganic phosphate. In Oryza sativa subsp. japonica (Rice), this protein is Probable inorganic phosphate transporter 1-4 (PHT1-4).